The chain runs to 354 residues: UPF0283 membrane protein plu2581 (354 aa).

A run of 3 helical transmembrane segments spans residues 71–91 (MVYG…VQWI), 101–121 (SALG…GSLV), and 214–234 (ESAL…FIAW).

The protein belongs to the UPF0283 family.

Its subcellular location is the cell inner membrane. This is UPF0283 membrane protein plu2581 from Photorhabdus laumondii subsp. laumondii (strain DSM 15139 / CIP 105565 / TT01) (Photorhabdus luminescens subsp. laumondii).